The primary structure comprises 165 residues: CDP-archaeol synthase (165 aa).

A run of 3 helical transmembrane segments spans residues 4-24, 78-98, and 118-138; these read IVQLFLLIWPPYVANGSAVLA, LLDAFLLATAAIVGDLLGAFV, and FLLMALLVYSLYRELHIPLLL.

Belongs to the CDP-archaeol synthase family. It depends on Mg(2+) as a cofactor.

It localises to the cell membrane. It carries out the reaction 2,3-bis-O-(geranylgeranyl)-sn-glycerol 1-phosphate + CTP + H(+) = CDP-2,3-bis-O-(geranylgeranyl)-sn-glycerol + diphosphate. Its pathway is membrane lipid metabolism; glycerophospholipid metabolism. Functionally, catalyzes the formation of CDP-2,3-bis-(O-geranylgeranyl)-sn-glycerol (CDP-archaeol) from 2,3-bis-(O-geranylgeranyl)-sn-glycerol 1-phosphate (DGGGP) and CTP. This reaction is the third ether-bond-formation step in the biosynthesis of archaeal membrane lipids. The chain is CDP-archaeol synthase from Pyrobaculum calidifontis (strain DSM 21063 / JCM 11548 / VA1).